Here is a 433-residue protein sequence, read N- to C-terminus: tRNA-2-methylthio-N(6)-dimethylallyladenosine synthase (433 aa).

The MTTase N-terminal domain maps to Lys-3–Phe-118. [4Fe-4S] cluster is bound by residues Cys-12, Cys-49, Cys-81, Cys-150, Cys-154, and Cys-157. One can recognise a Radical SAM core domain in the interval Arg-136–Glu-369. One can recognise a TRAM domain in the interval Ala-372–Ile-433.

This sequence belongs to the methylthiotransferase family. MiaB subfamily. In terms of assembly, monomer. Requires [4Fe-4S] cluster as cofactor.

Its subcellular location is the cytoplasm. It carries out the reaction N(6)-dimethylallyladenosine(37) in tRNA + (sulfur carrier)-SH + AH2 + 2 S-adenosyl-L-methionine = 2-methylsulfanyl-N(6)-dimethylallyladenosine(37) in tRNA + (sulfur carrier)-H + 5'-deoxyadenosine + L-methionine + A + S-adenosyl-L-homocysteine + 2 H(+). Its function is as follows. Catalyzes the methylthiolation of N6-(dimethylallyl)adenosine (i(6)A), leading to the formation of 2-methylthio-N6-(dimethylallyl)adenosine (ms(2)i(6)A) at position 37 in tRNAs that read codons beginning with uridine. This Campylobacter concisus (strain 13826) protein is tRNA-2-methylthio-N(6)-dimethylallyladenosine synthase.